Reading from the N-terminus, the 208-residue chain is Large ribosomal subunit protein uL4 (208 aa).

Positions 45–89 (RQGTHAHKNRSAVSGGGKKPWRQKGTGRARQGSTRSPQWRGGGTV) are disordered.

It belongs to the universal ribosomal protein uL4 family. In terms of assembly, part of the 50S ribosomal subunit.

In terms of biological role, one of the primary rRNA binding proteins, this protein initially binds near the 5'-end of the 23S rRNA. It is important during the early stages of 50S assembly. It makes multiple contacts with different domains of the 23S rRNA in the assembled 50S subunit and ribosome. Functionally, forms part of the polypeptide exit tunnel. The sequence is that of Large ribosomal subunit protein uL4 from Lactococcus lactis subsp. lactis (strain IL1403) (Streptococcus lactis).